Consider the following 613-residue polypeptide: Dihydroxy-acid dehydratase (613 aa).

Asp-81 lines the Mg(2+) pocket. Cys-122 is a [2Fe-2S] cluster binding site. Mg(2+)-binding residues include Asp-123 and Lys-124. Lys-124 bears the N6-carboxylysine mark. A [2Fe-2S] cluster-binding site is contributed by Cys-193. Glu-489 serves as a coordination point for Mg(2+). Ser-515 acts as the Proton acceptor in catalysis.

The protein belongs to the IlvD/Edd family. As to quaternary structure, homodimer. The cofactor is [2Fe-2S] cluster. Mg(2+) is required as a cofactor.

It catalyses the reaction (2R)-2,3-dihydroxy-3-methylbutanoate = 3-methyl-2-oxobutanoate + H2O. The catalysed reaction is (2R,3R)-2,3-dihydroxy-3-methylpentanoate = (S)-3-methyl-2-oxopentanoate + H2O. It functions in the pathway amino-acid biosynthesis; L-isoleucine biosynthesis; L-isoleucine from 2-oxobutanoate: step 3/4. Its pathway is amino-acid biosynthesis; L-valine biosynthesis; L-valine from pyruvate: step 3/4. Functionally, functions in the biosynthesis of branched-chain amino acids. Catalyzes the dehydration of (2R,3R)-2,3-dihydroxy-3-methylpentanoate (2,3-dihydroxy-3-methylvalerate) into 2-oxo-3-methylpentanoate (2-oxo-3-methylvalerate) and of (2R)-2,3-dihydroxy-3-methylbutanoate (2,3-dihydroxyisovalerate) into 2-oxo-3-methylbutanoate (2-oxoisovalerate), the penultimate precursor to L-isoleucine and L-valine, respectively. In Pseudomonas putida (strain W619), this protein is Dihydroxy-acid dehydratase.